The following is a 233-amino-acid chain: Somatolactin (233 aa).

The N-terminal stretch at 1 to 24 is a signal peptide; the sequence is MNMMQVMQSVVWAVLLWPCLVSLG. 3 cysteine pairs are disulfide-bonded: cysteine 29–cysteine 39, cysteine 89–cysteine 205, and cysteine 222–cysteine 230.

The protein belongs to the somatotropin/prolactin family. As to expression, pituitary gland.

Its subcellular location is the secreted. May be associated with ion regulation and reproduction. This is Somatolactin from Oncorhynchus keta (Chum salmon).